Consider the following 565-residue polypeptide: NAD-dependent malic enzyme (565 aa).

Catalysis depends on Tyr-104, which acts as the Proton donor. Arg-157 lines the NAD(+) pocket. The active-site Proton acceptor is Lys-175. Positions 246, 247, and 270 each coordinate a divalent metal cation. Asp-270 and Asn-418 together coordinate NAD(+).

The protein belongs to the malic enzymes family. In terms of assembly, homotetramer. Mg(2+) serves as cofactor. Mn(2+) is required as a cofactor.

The catalysed reaction is (S)-malate + NAD(+) = pyruvate + CO2 + NADH. It catalyses the reaction oxaloacetate + H(+) = pyruvate + CO2. The chain is NAD-dependent malic enzyme from Enterobacter sp. (strain 638).